We begin with the raw amino-acid sequence, 1353 residues long: Inhibitor of Bruton tyrosine kinase (1353 aa).

ANK repeat units follow at residues 51–80 (FGRNALHLVSSCGKKGVLDWLIQKGVDLLV) and 85–114 (SGWTALHRSIFYGHIDCVWSLLKHGVSLYI). RCC1 repeat units lie at residues 141-194 (PTDV…FLSQ), 195-246 (KGQV…VLTE), and 248-301 (GCVY…LWTR). BTB domains follow at residues 564–644 (HDVT…DFLT) and 768–836 (CDVT…VVIK). An ANK 3 repeat occupies 806-835 (SSCAALEMPIHSDILKVILDYLYTDEAVVI). Residues 970 to 1001 (HSETMFKKAKTKAKKKPRKRSDSSGGYNLSDI) form a disordered region. The span at 976 to 988 (KKAKTKAKKKPRK) shows a compositional bias: basic residues. Serine 990 is subject to Phosphoserine. A compositionally biased stretch (polar residues) spans 992 to 1001 (SSGGYNLSDI). Residues serine 1004, serine 1030, serine 1033, serine 1039, serine 1045, serine 1054, serine 1083, serine 1111, serine 1113, and serine 1116 each carry the phosphoserine modification. Residues 1134–1155 (KCGATPKSHLGKTVSHGVKLSQ) form a disordered region.

As to quaternary structure, interacts with the PH domain of BTK. Isoform 2 does not interact with BTK. Expressed in DeFew, HEK293T, HeLa and in Jurkat, MC3 and NB4 lymphoid cells (at protein level). Isoform 1 is the predominant isoform expressed in all examined tissues and cell lines. Highly expressed in hemopoietic tissues (fetal liver, spleen, lymph node, thymus, peripheral blood leukocytes and bone marrow). Weakly or not expressed in other tissues.

The protein resides in the cytoplasm. It localises to the membrane. It is found in the nucleus. Functionally, acts as an inhibitor of BTK tyrosine kinase activity, thereby playing a role in B-cell development. Down-regulates BTK kinase activity, leading to interference with BTK-mediated calcium mobilization and NF-kappa-B-driven transcription. The sequence is that of Inhibitor of Bruton tyrosine kinase (IBTK) from Homo sapiens (Human).